Consider the following 379-residue polypeptide: Glucose-1-phosphate adenylyltransferase (379 aa).

Alpha-D-glucose 1-phosphate contacts are provided by residues G164, 179–180, and S190; that span reads EK.

The protein belongs to the bacterial/plant glucose-1-phosphate adenylyltransferase family. In terms of assembly, homotetramer.

The catalysed reaction is alpha-D-glucose 1-phosphate + ATP + H(+) = ADP-alpha-D-glucose + diphosphate. Its pathway is glycan biosynthesis; glycogen biosynthesis. Involved in the biosynthesis of ADP-glucose, a building block required for the elongation reactions to produce glycogen. Catalyzes the reaction between ATP and alpha-D-glucose 1-phosphate (G1P) to produce pyrophosphate and ADP-Glc. The protein is Glucose-1-phosphate adenylyltransferase of Streptococcus equi subsp. zooepidemicus (strain H70).